Reading from the N-terminus, the 480-residue chain is MSGHKCYSWELQDRFAQDKSVVNKMQQKYWETKQAFIKATGKKEDEHVVASDADLDAKLELFHSIQRTCLDLSKAIVLYQKRICFLSQEENELGKFLRSQGFQDKTRAGKMMQATGKALCFSSQQRLALRNPLCRFHQEVETFRHRAISDTWLTVNRMEQCRTEYRGALLWMKDVSQELDPDLYKQMEKFRKVQTQVRLAKKNFDKLKMDVCQKVDLLGASRCNLLSHMLATYQTTLLHFWEKTSHTMAAIHESFKGYQPYEFTTLKSLQDPMKKLVEKEKKKSSRRENREAVAQEPRQLISLEEENQHKESSTCQKEEGKSVPSSVDKSSADDACSGPIDELLDVKPEEACLGPMAGTPEPESGDKDDLLLLNEIFSTSSLDEGEFSREWAAVFGDDRLKEPAPMGAQGEPDPKPQIGSAFLPSQLLDQNMKDLQASLQEPAKAASDLTAWFSLFADLDPLSNPDAIGKTDKEHELLNA.

The AH domain maps to 50-253 (ASDADLDAKL…TSHTMAAIHE (204 aa)). Composition is skewed to basic and acidic residues over residues 276-293 (LVEK…REAV) and 306-321 (ENQH…EEGK). Disordered stretches follow at residues 276 to 338 (LVEK…ACSG) and 400 to 421 (LKEP…IGSA).

It is found in the cytoplasm. It localises to the cytosol. The protein localises to the golgi apparatus membrane. Its subcellular location is the cytoplasmic vesicle. The protein resides in the secretory vesicle membrane. It is found in the secretory vesicle. It localises to the synaptic vesicle membrane. Its function is as follows. May play a role in neurotransmitter secretion. In Rattus norvegicus (Rat), this protein is Islet cell autoantigen 1.